The primary structure comprises 282 residues: 4-hydroxy-3-methylbut-2-enyl diphosphate reductase (282 aa).

Residue Cys12 participates in [4Fe-4S] cluster binding. (2E)-4-hydroxy-3-methylbut-2-enyl diphosphate contacts are provided by His40 and His72. The dimethylallyl diphosphate site is built by His40 and His72. 2 residues coordinate isopentenyl diphosphate: His40 and His72. Cys94 is a [4Fe-4S] cluster binding site. Residue His122 participates in (2E)-4-hydroxy-3-methylbut-2-enyl diphosphate binding. His122 contacts dimethylallyl diphosphate. His122 serves as a coordination point for isopentenyl diphosphate. Glu124 acts as the Proton donor in catalysis. (2E)-4-hydroxy-3-methylbut-2-enyl diphosphate is bound at residue Thr160. Cys188 provides a ligand contact to [4Fe-4S] cluster. Residues Ser216, Asn218, and Ser260 each contribute to the (2E)-4-hydroxy-3-methylbut-2-enyl diphosphate site. Ser216, Asn218, and Ser260 together coordinate dimethylallyl diphosphate. Isopentenyl diphosphate-binding residues include Ser216, Asn218, and Ser260.

Belongs to the IspH family. [4Fe-4S] cluster is required as a cofactor.

The enzyme catalyses isopentenyl diphosphate + 2 oxidized [2Fe-2S]-[ferredoxin] + H2O = (2E)-4-hydroxy-3-methylbut-2-enyl diphosphate + 2 reduced [2Fe-2S]-[ferredoxin] + 2 H(+). It carries out the reaction dimethylallyl diphosphate + 2 oxidized [2Fe-2S]-[ferredoxin] + H2O = (2E)-4-hydroxy-3-methylbut-2-enyl diphosphate + 2 reduced [2Fe-2S]-[ferredoxin] + 2 H(+). The protein operates within isoprenoid biosynthesis; dimethylallyl diphosphate biosynthesis; dimethylallyl diphosphate from (2E)-4-hydroxy-3-methylbutenyl diphosphate: step 1/1. It participates in isoprenoid biosynthesis; isopentenyl diphosphate biosynthesis via DXP pathway; isopentenyl diphosphate from 1-deoxy-D-xylulose 5-phosphate: step 6/6. Catalyzes the conversion of 1-hydroxy-2-methyl-2-(E)-butenyl 4-diphosphate (HMBPP) into a mixture of isopentenyl diphosphate (IPP) and dimethylallyl diphosphate (DMAPP). Acts in the terminal step of the DOXP/MEP pathway for isoprenoid precursor biosynthesis. This chain is 4-hydroxy-3-methylbut-2-enyl diphosphate reductase, found in Geotalea uraniireducens (strain Rf4) (Geobacter uraniireducens).